The sequence spans 342 residues: Bifunctional terpene synthase Agr4 (342 aa).

Residues D87, N222, S226, and E230 each coordinate Mg(2+). A DDXXD motif motif is present at residues 87 to 91; it reads DEVSD. (2E,6E)-farnesyl diphosphate contacts are provided by R308 and Y309.

It belongs to the terpene synthase family. Mg(2+) is required as a cofactor.

The catalysed reaction is (2E,6E)-farnesyl diphosphate = delta-cadinene + diphosphate. It carries out the reaction (2E,6E)-farnesyl diphosphate = gamma-muurolene + diphosphate. The enzyme catalyses (2E,6E)-farnesyl diphosphate = beta-copaene + diphosphate. It catalyses the reaction (2E)-geranyl diphosphate = beta-myrcene + diphosphate. Terpene cyclase that catalyzes the cyclization of farnesyl diphosphate (FPP) to various sesquiterpenes, including beta-copaene, alpha-cubebene, cadina-1(6),4-diene, gamma-muurolene, delta-cadinene, epizonarene, epicubenol and cubenol. Agr4 is also able to use the monoterpene precursor geranyl diphosphate (GPP) as substrates to synthesize the monoterpene beta-myrcene. Delta-cadinene is the major product of Agr4. This Cyclocybe aegerita (Black poplar mushroom) protein is Bifunctional terpene synthase Agr4.